A 1434-amino-acid chain; its full sequence is Receptor-type tyrosine-protein phosphatase U (1434 aa).

Positions 1-17 (MRSARALLLALALRVCA) are cleaved as a signal peptide. At 18–748 (LDSETPSAGC…QHSEEMGLIL (731 aa)) the chain is on the extracellular side. The region spanning 25 to 187 (AGCTFEEDDD…ILLLNYPCSK (163 aa)) is the MAM domain. An N-linked (GlcNAc...) asparagine glycan is attached at asparagine 74. The 86-residue stretch at 189-274 (PHFSRLGDVE…TQSSRGSGVS (86 aa)) folds into the Ig-like C2-type domain. Cysteine 209 and cysteine 263 are joined by a disulfide. Fibronectin type-III domains follow at residues 287 to 382 (PIAP…CAEP), 385 to 483 (APKG…TDED), 484 to 590 (VPGG…SAPT), and 597 to 677 (PSPL…TEAK). A glycan (N-linked (GlcNAc...) asparagine) is linked at asparagine 409. N-linked (GlcNAc...) asparagine glycosylation occurs at asparagine 684. Residues 749 to 769 (GICAGGLVVLIILLGAIIVVI) traverse the membrane as a helical segment. Topologically, residues 770 to 1434 (RKGKPVNMTK…LEYLESLETR (665 aa)) are cytoplasmic. Positions 824-839 (RGDQRSSVVNESSSLL) are enriched in polar residues. The disordered stretch occupies residues 824-851 (RGDQRSSVVNESSSLLGGSPRRQCGRKG). 2 consecutive Tyrosine-protein phosphatase domains span residues 876 to 1132 (KTAE…ILEA) and 1164 to 1427 (LREE…ALEY). Residues glutamate 1041, 1073-1079 (CSAGTGR), and glutamine 1117 each bind substrate. Cysteine 1073 serves as the catalytic Phosphocysteine intermediate. Cysteine 1368 acts as the Phosphocysteine intermediate in catalysis.

This sequence belongs to the protein-tyrosine phosphatase family. Receptor class 2B subfamily.

Its subcellular location is the cell junction. It localises to the cell membrane. The enzyme catalyses O-phospho-L-tyrosyl-[protein] + H2O = L-tyrosyl-[protein] + phosphate. Its function is as follows. Tyrosine-protein phosphatase which dephosphorylates CTNNB1. May function in cell proliferation and migration and play a role in the maintenance of epithelial integrity. The polypeptide is Receptor-type tyrosine-protein phosphatase U (PTPRU) (Gallus gallus (Chicken)).